We begin with the raw amino-acid sequence, 99 residues long: CLAVATA3/ESR (CLE)-related protein 11 (99 aa).

A signal peptide spans 1–31 (MTKQPKPCSFLFHISLLSALFVFLLISFAFT). Pro-91 and Pro-94 each carry hydroxyproline. Pro-94 is a glycosylation site (O-linked (Ara...) hydroxyproline).

Belongs to the CLV3/ESR signal peptide family. Post-translationally, the O-glycosylation (arabinosylation) of the hydroxyproline Pro-94 enhances binding affinity of the CLE11p peptide for its receptor. In terms of tissue distribution, mostly expressed in seedlings, roots and siliques, and, to a lower extent, in leaves, flowers, stems and apex.

Its subcellular location is the secreted. It is found in the extracellular space. In terms of biological role, extracellular signal peptide that regulates cell fate. Represses root apical meristem maintenance. Regulates the transition of protophloem cells from proliferation to differentiation, thus impinging on postembryonic growth capacity of the root meristem; this signaling pathway requires CRN and CLV2. The protein is CLAVATA3/ESR (CLE)-related protein 11 of Arabidopsis thaliana (Mouse-ear cress).